The following is a 505-amino-acid chain: Lysine--tRNA ligase (505 aa).

Mg(2+) contacts are provided by glutamate 415 and glutamate 422.

Belongs to the class-II aminoacyl-tRNA synthetase family. Homodimer. Requires Mg(2+) as cofactor.

Its subcellular location is the cytoplasm. The catalysed reaction is tRNA(Lys) + L-lysine + ATP = L-lysyl-tRNA(Lys) + AMP + diphosphate. The chain is Lysine--tRNA ligase from Xanthomonas oryzae pv. oryzae (strain MAFF 311018).